Here is a 332-residue protein sequence, read N- to C-terminus: CMRF35-like molecule 1 (332 aa).

A signal peptide spans 1–18; the sequence is MHLSLLALFLFWISGCFT. The Extracellular portion of the chain corresponds to 19–181; sequence AQDPVTGPEE…GDGNGFLDLS (163 aa). In terms of domain architecture, Ig-like V-type spans 22–125; the sequence is PVTGPEEVSG…YDHMFKVHVS (104 aa). 2 disulfides stabilise this stretch: cysteine 41/cysteine 109 and cysteine 55/cysteine 63. A glycan (N-linked (GlcNAc...) asparagine) is linked at asparagine 89. The helical transmembrane segment at 182-202 threads the bilayer; sequence VLLPVISAALLLLLLVVSLIA. Over 203-332 the chain is Cytoplasmic; the sequence is WRMVRRQKKA…EYSSIRRPMP (130 aa). Disordered stretches follow at residues 251–270 and 313–332; these read PRTS…KDHQ and PRTN…RPMP.

Belongs to the CD300 family. As to quaternary structure, interacts with PTPN6/SHP-1 in a tyrosine phosphorylation dependent manner. Interacts with IL4R. In terms of processing, phosphorylated on tyrosine.

It localises to the cell membrane. Functionally, acts as an inhibitory receptor for myeloid cells and mast cells. Positively regulates the phagocytosis of apoptotic cells (efferocytosis) via phosphatidylserine (PS) recognition; recognizes and binds PS as a ligand which is expressed on the surface of apoptotic cells. Plays an important role in the maintenance of immune homeostasis, by promoting macrophage-mediated efferocytosis and by inhibiting dendritic cell-mediated efferocytosis. Negatively regulates Fc epsilon receptor-dependent mast cell activation and allergic responses via binding to ceramide and sphingomyelin which act as ligands. May act as a coreceptor for interleukin 4 (IL-4). Associates with and regulates IL-4 receptor alpha-mediated responses by augmenting IL-4- and IL-13-induced signaling. Negatively regulates the Toll-like receptor (TLR) signaling mediated by MYD88 and TRIF through activation of PTPN6/SHP-1 and PTPN11/SHP-2. Inhibits osteoclast formation. Induces macrophage cell death upon engagement. In Rattus norvegicus (Rat), this protein is CMRF35-like molecule 1 (Cd300lf).